A 440-amino-acid polypeptide reads, in one-letter code: Zinc finger MYND domain-containing protein 10 (440 aa).

Positions 366-440 are interaction with DNAAF11; the sequence is QDLRLQARRW…VLAAQGDRAK (75 aa). 8 residues coordinate Zn(2+): cysteine 394, cysteine 397, cysteine 405, cysteine 408, cysteine 414, cysteine 418, histidine 426, and cysteine 430. The segment at 394–430 adopts an MYND-type zinc-finger fold; the sequence is CAYCSAEASKRCSRCQNEWYCCRECQVKHWEKHGKTC.

It belongs to the ZMYND10 family. As to quaternary structure, interacts (via C-terminus) with DNAAF11 (via CS domain); this interaction stabilizes DNAAF11 at the protein level. Interacts (via C-terminus) with DNAL1; this interaction stabilizes DNAL1 at the protein level. Interacts with DNAAF4, HSPA8, IQUB, RUVBL2 and DYNTL5.

Its subcellular location is the cytoplasm. It is found in the cytoskeleton. The protein resides in the microtubule organizing center. It localises to the centrosome. The protein localises to the centriolar satellite. Its subcellular location is the apical cell membrane. It is found in the dynein axonemal particle. Plays a role in axonemal structure organization and motility. Involved in axonemal pre-assembly of inner and outer dynein arms (IDA and ODA, respectively) for proper axoneme building for cilia motility. May act by indirectly regulating transcription of dynein proteins. The protein is Zinc finger MYND domain-containing protein 10 of Homo sapiens (Human).